A 697-amino-acid polypeptide reads, in one-letter code: MHAIAPRLLLLFVLSGLPGTRGGSGVPGPINPPNNDVVFPGGSPVAQYCYAYPRLDDPGPLGSADAGRQDLPRRVVRHEPLGRSFLTGGLVLLAPPVRGFGAPNATYAAHVTYYRLTRACRQPILLRQYGGCRGGEPPSPKTCGSYTYTYQGGGPPTRYALVNASLLVPIWDRAAETFEYQIELGGELHVGLLWVEVGGEGPGPTAPPQAARAEGGPCVPPVPAGRPWRSVPPVWYSAPNPGFRGLRFRERCLPPQTPAAPSDLPRVAFAPQSLLVGITGRTFIRMARPTEDGVLPPHWAPGALDDGPYAPFPPRPRFRRALRTDPEGVDPDVRAPRTGRRLMALTEDASSDSPTSAPEKTPLPVSATAMAPSVDPSAEPTAPATTTPPDEMATQAATVAVTPEETAVASPPATASVESSPPPAAAATPGAGHTNTSSASAAKTPPTTPAPTTPPPTSTHATPRPTTPGPQTTPPGPATPGPVGASAAPTADSPLTALPPATAPGPSAANVSVAATTATPGTRGTARTPPTDPKTHPHGPADAPPGSPAPPPPEHRGGPEEFEGAGDGEPPEDDDSATGLAFRTPNPNKPPPARPGPIRPTLPPGILGPLAPNTPRPPAQAPAKDMPSGPTPQHIPLFWFLTASPALDILFIISTTIHTAAFVCLVALAAQLWRGRAGRRRYAHPSVRYVCLPPERD.

The first 22 residues, 1–22 (MHAIAPRLLLLFVLSGLPGTRG), serve as a signal peptide directing secretion. Residues 23-648 (GSGVPGPINP…WFLTASPALD (626 aa)) are Virion surface-facing. 2 N-linked (GlcNAc...) asparagine; by host glycosylation sites follow: Asn-104 and Asn-163. Disordered stretches follow at residues 298–389 (HWAP…TTPP) and 402–630 (TPEE…PSGP). A compositionally biased stretch (basic and acidic residues) spans 322–335 (LRTDPEGVDPDVRA). Low complexity-rich tracts occupy residues 375 to 389 (DPSAEPTAPATTTPP) and 402 to 445 (TPEE…AKTP). The N-linked (GlcNAc...) asparagine; by host glycan is linked to Asn-435. Pro residues-rich tracts occupy residues 446–457 (PTTPAPTTPPPT) and 465–480 (PTTPGPQTTPPGPATP). Residues 481–529 (GPVGASAAPTADSPLTALPPATAPGPSAANVSVAATTATPGTRGTARTP) show a composition bias toward low complexity. N-linked (GlcNAc...) asparagine; by host glycosylation is present at Asn-510. Positions 542–552 (DAPPGSPAPPP) are enriched in pro residues. The span at 560–576 (EEFEGAGDGEPPEDDDS) shows a compositional bias: acidic residues. Residues 587–603 (PNKPPPARPGPIRPTLP) are compositionally biased toward pro residues. The helical transmembrane segment at 649–669 (ILFIISTTIHTAAFVCLVALA) threads the bilayer. Residues 670–697 (AQLWRGRAGRRRYAHPSVRYVCLPPERD) are Intravirion-facing.

The protein belongs to the alphaherpesvirinae glycoprotein G family.

Its subcellular location is the virion membrane. In terms of biological role, chemokine-binding protein that inhibits neutrophils' chemotaxis. In Homo sapiens (Human), this protein is Envelope glycoprotein G (gG).